We begin with the raw amino-acid sequence, 95 residues long: Signal recognition particle 19 kDa protein (95 aa).

This sequence belongs to the SRP19 family. In terms of assembly, part of the signal recognition particle protein translocation system, which is composed of SRP and FtsY. Archaeal SRP consists of a 7S RNA molecule of 300 nucleotides and two protein subunits: SRP54 and SRP19.

The protein localises to the cytoplasm. In terms of biological role, involved in targeting and insertion of nascent membrane proteins into the cytoplasmic membrane. Binds directly to 7S RNA and mediates binding of the 54 kDa subunit of the SRP. This is Signal recognition particle 19 kDa protein from Staphylothermus marinus (strain ATCC 43588 / DSM 3639 / JCM 9404 / F1).